Consider the following 118-residue polypeptide: Protein TusC (118 aa).

It belongs to the DsrF/TusC family. As to quaternary structure, heterohexamer, formed by a dimer of trimers. The hexameric TusBCD complex contains 2 copies each of TusB, TusC and TusD. The TusBCD complex interacts with TusE.

It localises to the cytoplasm. Part of a sulfur-relay system required for 2-thiolation of 5-methylaminomethyl-2-thiouridine (mnm(5)s(2)U) at tRNA wobble positions. The chain is Protein TusC from Salmonella gallinarum (strain 287/91 / NCTC 13346).